The chain runs to 367 residues: Aminomethyltransferase (367 aa).

This sequence belongs to the GcvT family. In terms of assembly, the glycine cleavage system is composed of four proteins: P, T, L and H.

It catalyses the reaction N(6)-[(R)-S(8)-aminomethyldihydrolipoyl]-L-lysyl-[protein] + (6S)-5,6,7,8-tetrahydrofolate = N(6)-[(R)-dihydrolipoyl]-L-lysyl-[protein] + (6R)-5,10-methylene-5,6,7,8-tetrahydrofolate + NH4(+). Functionally, the glycine cleavage system catalyzes the degradation of glycine. The protein is Aminomethyltransferase of Shouchella clausii (strain KSM-K16) (Alkalihalobacillus clausii).